The chain runs to 824 residues: Type IV secretion system protein PtlC (824 aa).

456–463 (GQSGSGKT) lines the ATP pocket.

The protein belongs to the TrbE/VirB4 family.

It localises to the cell membrane. In terms of biological role, component of the type IV secretion system ptl essential for secretion of assembled pertussis toxin (PTX) through the outer membrane. This Bordetella pertussis (strain Tohama I / ATCC BAA-589 / NCTC 13251) protein is Type IV secretion system protein PtlC (ptlC).